Here is a 283-residue protein sequence, read N- to C-terminus: MSFTSRLKKELFIKAQNLVPQHQLSRVVGKVAASENPILKAAVIHAFKTKYGIDLSIAEQGNALKYKSFNDFFTRALKDGVRLVDENPDSIVSPADGAISQIGKITAGKVFQAKGQSFSVEKLIGDPQLAQPFQEGEFATVYLSPRDYHRVHMPFSGILTETLYVPGELFSVNQVTAENVPGLFARNERMVCLFDTELGRMAVVLVGAMIVAGIETVATGKVKPSGRIELQHHELKLEKGAELGRFYLGSTAIILFEKDKIEWEKRFKAESVVVMGERMGHTL.

Residues aspartate 96, histidine 152, and serine 250 each act as charge relay system; for autoendoproteolytic cleavage activity in the active site. Serine 250 (schiff-base intermediate with substrate; via pyruvic acid; for decarboxylase activity) is an active-site residue. A Pyruvic acid (Ser); by autocatalysis modification is found at serine 250.

Belongs to the phosphatidylserine decarboxylase family. PSD-B subfamily. Prokaryotic type I sub-subfamily. In terms of assembly, heterodimer of a large membrane-associated beta subunit and a small pyruvoyl-containing alpha subunit. Requires pyruvate as cofactor. Post-translationally, is synthesized initially as an inactive proenzyme. Formation of the active enzyme involves a self-maturation process in which the active site pyruvoyl group is generated from an internal serine residue via an autocatalytic post-translational modification. Two non-identical subunits are generated from the proenzyme in this reaction, and the pyruvate is formed at the N-terminus of the alpha chain, which is derived from the carboxyl end of the proenzyme. The autoendoproteolytic cleavage occurs by a canonical serine protease mechanism, in which the side chain hydroxyl group of the serine supplies its oxygen atom to form the C-terminus of the beta chain, while the remainder of the serine residue undergoes an oxidative deamination to produce ammonia and the pyruvoyl prosthetic group on the alpha chain. During this reaction, the Ser that is part of the protease active site of the proenzyme becomes the pyruvoyl prosthetic group, which constitutes an essential element of the active site of the mature decarboxylase.

Its subcellular location is the cell membrane. It catalyses the reaction a 1,2-diacyl-sn-glycero-3-phospho-L-serine + H(+) = a 1,2-diacyl-sn-glycero-3-phosphoethanolamine + CO2. It functions in the pathway phospholipid metabolism; phosphatidylethanolamine biosynthesis; phosphatidylethanolamine from CDP-diacylglycerol: step 2/2. Functionally, catalyzes the formation of phosphatidylethanolamine (PtdEtn) from phosphatidylserine (PtdSer). This Acinetobacter baumannii (strain SDF) protein is Phosphatidylserine decarboxylase proenzyme.